The chain runs to 1327 residues: MAPKDDPDNRGFDDQRRPSQRSTVLAIPALAVNDPKSDPKIASDLPANYVDDDDDAPKMYTPSLLEKILNYALCRGDIANQQLEAQPVSIPGLFRYGKKFDYLLLFIGTICAIISGVSQPILALVSGRVTNALLVYPPTSKQFRNKANENVYIFLGIGIFISITNFIQYMCFQHCCTRVMAQMRHRFVYSVLRQNAGWFDKNHSGTITTKLNDSMERIREGIGDKLGVLLRGFAMLIAAIVVAYIYEWRLASMMLGVAPTCCICMSLLARQMTSTTIKELIGVGKAGSIAEESLMGVRTVQAFNGQEEMVGRYEAELEKGRKFAVWKGFWSGFFGGLFFFWLFSFLGCGMLYGAYLLKVGIITTPGDVFIVVMSMLLGAYFLGLISPHMMVLLNARVSAASIYQTIDRVPKIDPYSKAGKRLQNVVGRVKFENVHFRYPSRKDAKILNGLNLVVEPGTSVALVGHSGCGKSTSVGLLTRLYEPEAGNVTIDGTDVRELNIEWLRNTVGIVQQEPILFNDTIHNNLLIGNPGSTRETMIEVCKMANAHDFIEKMPKGYDTLIGDGGVQLSGGQKQRVAIARTLIRDPKVLLLDEATSALDAQSESIVQSALNNASKGRTTIMIAHRLSTIREADKIVFFEKGVIVEAGNHEELVRLGGRYFDLVKAQQFKADPEATEEFEEEEIDLDDTSRSSRRSSMTSARSGSEAFRRGNSLNDSFSGSKRSAQADAENSAFAANEAAIMAEDGQITAGYLDIFKNAKGNYLYMFLGTVFALIRGLELPALALIFGWVFEGFTFVPYGGRMMHRMAMAVIAFASVGVGVWFSQLASSVLFAVVSENLSMRFRVQSFRNLLYQDASYFDNPAHAPGKLITRLASDAPNIKAVVDARMLQVIYALAAIIANIAIAFIYCWQIGILGTSLILLLAFVMIGLAYKISLMNVEQIQNDDAGRIAIEIIENVKTIQLLTRCELFFDHYQTSSKQQKRSELKKGMIEAINYSLTQSFMYFMMCFTYAVGIRIIYQGDKSSDDTFKGIIAMMLGAVAVMNSAQYFPEFVKAKTAAGMLFNIIYRKPRTGDLMEGDRPEIRGNILFENVKFSYPQRPLQPIMKGLQWTALRGQTVALVGPSGSGKSTNIGMLERFYDVTGGALRIDGQDIRKLSLFHLRTQMALVGQEPRLFAGTIRENVCLGLKDVPLEKINQALELANANRFLANLPAGIDTDVGEKGGQLSGGQKQRIAIARALVRDPKILLLDEATSALDSESERAVQEALDRAREGRTCITIAHRLSSIQNSDLIVYIDKGKVQEAGNHTQLMHQKGRYYKLIKKQDLAV.

Residues 1 to 17 (MAPKDDPDNRGFDDQRR) are compositionally biased toward basic and acidic residues. The tract at residues 1 to 23 (MAPKDDPDNRGFDDQRRPSQRST) is disordered. Topologically, residues 1 to 104 (MAPKDDPDNR…RYGKKFDYLL (104 aa)) are cytoplasmic. The chain crosses the membrane as a helical span at residues 105–125 (LFIGTICAIISGVSQPILALV). The 289-residue stretch at 106–394 (FIGTICAIIS…ISPHMMVLLN (289 aa)) folds into the ABC transmembrane type-1 1 domain. The Extracellular portion of the chain corresponds to 126 to 151 (SGRVTNALLVYPPTSKQFRNKANENV). Residues 152–172 (YIFLGIGIFISITNFIQYMCF) traverse the membrane as a helical segment. Residues 173–225 (QHCCTRVMAQMRHRFVYSVLRQNAGWFDKNHSGTITTKLNDSMERIREGIGDK) lie on the Cytoplasmic side of the membrane. The helical transmembrane segment at 226–246 (LGVLLRGFAMLIAAIVVAYIY) threads the bilayer. Position 247 (glutamate 247) is a topological domain, extracellular. The chain crosses the membrane as a helical span at residues 248 to 268 (WRLASMMLGVAPTCCICMSLL). The Cytoplasmic segment spans residues 269–331 (ARQMTSTTIK…KFAVWKGFWS (63 aa)). The chain crosses the membrane as a helical span at residues 332–352 (GFFGGLFFFWLFSFLGCGMLY). The Extracellular segment spans residues 353 to 364 (GAYLLKVGIITT). The helical transmembrane segment at 365-385 (PGDVFIVVMSMLLGAYFLGLI) threads the bilayer. At 386 to 766 (SPHMMVLLNA…NAKGNYLYMF (381 aa)) the chain is on the cytoplasmic side. An ABC transporter 1 domain is found at 429–665 (VKFENVHFRY…GGRYFDLVKA (237 aa)). 464–471 (GHSGCGKS) provides a ligand contact to ATP. Residues 671-721 (DPEATEEFEEEEIDLDDTSRSSRRSSMTSARSGSEAFRRGNSLNDSFSGSK) form a disordered region. The span at 673–686 (EATEEFEEEEIDLD) shows a compositional bias: acidic residues. Residues 694 to 704 (RSSMTSARSGS) are compositionally biased toward low complexity. Over residues 711–721 (NSLNDSFSGSK) the composition is skewed to polar residues. An ABC transmembrane type-1 2 domain is found at 766–1053 (FLGTVFALIR…SAQYFPEFVK (288 aa)). The chain crosses the membrane as a helical span at residues 767-789 (LGTVFALIRGLELPALALIFGWV). Residues 790–805 (FEGFTFVPYGGRMMHR) are Extracellular-facing. Residues 806–826 (MAMAVIAFASVGVGVWFSQLA) form a helical membrane-spanning segment. Over 827–886 (SSVLFAVVSENLSMRFRVQSFRNLLYQDASYFDNPAHAPGKLITRLASDAPNIKAVVDAR) the chain is Cytoplasmic. Residues 887–907 (MLQVIYALAAIIANIAIAFIY) traverse the membrane as a helical segment. Topologically, residues 908 to 910 (CWQ) are extracellular. The chain crosses the membrane as a helical span at residues 911–931 (IGILGTSLILLLAFVMIGLAY). Over 932–996 (KISLMNVEQI…KGMIEAINYS (65 aa)) the chain is Cytoplasmic. Residues 997-1017 (LTQSFMYFMMCFTYAVGIRII) form a helical membrane-spanning segment. Over 1018–1030 (YQGDKSSDDTFKG) the chain is Extracellular. Residues 1031–1051 (IIAMMLGAVAVMNSAQYFPEF) form a helical membrane-spanning segment. At 1052-1327 (VKAKTAAGML…KLIKKQDLAV (276 aa)) the chain is on the cytoplasmic side. The region spanning 1086–1322 (ILFENVKFSY…KGRYYKLIKK (237 aa)) is the ABC transporter 2 domain. Residue 1121-1128 (GPSGSGKS) participates in ATP binding.

It belongs to the ABC transporter superfamily. ABCB family. Multidrug resistance exporter (TC 3.A.1.201) subfamily. Expressed in pharyngeal epithelial cells that surround the anterior pharyngeal cuticle. Shares same expression pattern as sms-5.

Its subcellular location is the apical cell membrane. Its function is as follows. Contributes to the establishment of a polar lipid barrier to block small molecule passage into the pharyngeal cuticle. Probably exports polar lipids into the developing pharyngeal cuticle to protect against xenobiotic insult. Likely functions in the same pathway as sphingomyelin synthase sms-5. This is P-glycoprotein 14 from Caenorhabditis elegans.